The sequence spans 102 residues: Small ribosomal subunit protein uS10 (102 aa).

The protein belongs to the universal ribosomal protein uS10 family. Part of the 30S ribosomal subunit.

Its function is as follows. Involved in the binding of tRNA to the ribosomes. In Methylobacillus flagellatus (strain ATCC 51484 / DSM 6875 / VKM B-1610 / KT), this protein is Small ribosomal subunit protein uS10.